A 166-amino-acid polypeptide reads, in one-letter code: Regulatory protein RecX (166 aa).

It belongs to the RecX family.

The protein localises to the cytoplasm. In terms of biological role, modulates RecA activity. This chain is Regulatory protein RecX, found in Shigella dysenteriae serotype 1 (strain Sd197).